Consider the following 426-residue polypeptide: Serine--tRNA ligase (426 aa).

Thr-231–Glu-233 lines the L-serine pocket. Arg-262–Glu-264 lines the ATP pocket. Glu-285 provides a ligand contact to L-serine. ATP is bound at residue Glu-349–Ser-352. Ser-384 contacts L-serine.

The protein belongs to the class-II aminoacyl-tRNA synthetase family. Type-1 seryl-tRNA synthetase subfamily. In terms of assembly, homodimer. The tRNA molecule binds across the dimer.

It localises to the cytoplasm. It carries out the reaction tRNA(Ser) + L-serine + ATP = L-seryl-tRNA(Ser) + AMP + diphosphate + H(+). The enzyme catalyses tRNA(Sec) + L-serine + ATP = L-seryl-tRNA(Sec) + AMP + diphosphate + H(+). The protein operates within aminoacyl-tRNA biosynthesis; selenocysteinyl-tRNA(Sec) biosynthesis; L-seryl-tRNA(Sec) from L-serine and tRNA(Sec): step 1/1. Functionally, catalyzes the attachment of serine to tRNA(Ser). Is also able to aminoacylate tRNA(Sec) with serine, to form the misacylated tRNA L-seryl-tRNA(Sec), which will be further converted into selenocysteinyl-tRNA(Sec). This Laribacter hongkongensis (strain HLHK9) protein is Serine--tRNA ligase.